The primary structure comprises 498 residues: Inosine-5'-monophosphate dehydrogenase (498 aa).

2 consecutive CBS domains span residues 98 to 155 (MVVN…EQKI) and 159 to 216 (MTRE…PHAS). NAD(+) is bound by residues Asp253 and 303–305 (GIG). Residues Gly305 and Gly307 each contribute to the K(+) site. Residue Ser308 participates in IMP binding. Cys310 is a K(+) binding site. Cys310 serves as the catalytic Thioimidate intermediate. IMP-binding positions include 343 to 345 (DGG), 366 to 367 (GS), and 390 to 394 (YRGMG). Arg406 (proton acceptor) is an active-site residue. Glu421 contributes to the IMP binding site. K(+) is bound by residues Glu475, Ser476, and His477.

It belongs to the IMPDH/GMPR family. As to quaternary structure, homotetramer. It depends on K(+) as a cofactor.

The catalysed reaction is IMP + NAD(+) + H2O = XMP + NADH + H(+). Its pathway is purine metabolism; XMP biosynthesis via de novo pathway; XMP from IMP: step 1/1. With respect to regulation, mycophenolic acid (MPA) is a non-competitive inhibitor that prevents formation of the closed enzyme conformation by binding to the same site as the amobile flap. In contrast, mizoribine monophosphate (MZP) is a competitive inhibitor that induces the closed conformation. MPA is a potent inhibitor of mammalian IMPDHs but a poor inhibitor of the bacterial enzymes. MZP is a more potent inhibitor of bacterial IMPDH. In terms of biological role, catalyzes the conversion of inosine 5'-phosphate (IMP) to xanthosine 5'-phosphate (XMP), the first committed and rate-limiting step in the de novo synthesis of guanine nucleotides, and therefore plays an important role in the regulation of cell growth. The protein is Inosine-5'-monophosphate dehydrogenase of Rhizobium tropici.